Reading from the N-terminus, the 168-residue chain is Protein GRIM REAPER (168 aa).

Positions 1 to 30 (MVIKIPNTFIKATSLLSLILYFLIIATSKS) are cleaved as a signal peptide. Asn59 carries N-linked (GlcNAc...) asparagine glycosylation.

Belongs to the STIG1 family. Interacts with PRK5 and to a lower extent with PRK4. In terms of tissue distribution, highly expressed in flowers, and at very low levels in leaves.

It is found in the secreted. It localises to the extracellular space. Its subcellular location is the apoplast. Its function is as follows. Involved in the regulation of cell death induced by extracellular reactive oxygen species. Only the processed peptide, and not the full length GRI can bind in vivo to the extracellular domain of the receptor PRK5. The GRIp-induced cell death is superoxide and salicylic acid dependent. In Arabidopsis thaliana (Mouse-ear cress), this protein is Protein GRIM REAPER.